Here is a 117-residue protein sequence, read N- to C-terminus: Protein Wnt-6 (117 aa).

A lipid anchor (O-palmitoleoyl serine; by PORCN) is attached at Ser1. The cysteines at positions 83 and 98 are disulfide-linked. N-linked (GlcNAc...) asparagine glycosylation is present at Asn84.

The protein belongs to the Wnt family. In terms of processing, palmitoleoylation is required for efficient binding to frizzled receptors. Depalmitoleoylation leads to Wnt signaling pathway inhibition.

Its subcellular location is the secreted. The protein resides in the extracellular space. The protein localises to the extracellular matrix. Its function is as follows. Ligand for members of the frizzled family of seven transmembrane receptors. Probable developmental protein. May be a signaling molecule which affects the development of discrete regions of tissues. Is likely to signal over only few cell diameters. This is Protein Wnt-6 (wnt6) from Thunnus thynnus (Atlantic bluefin tuna).